The primary structure comprises 110 residues: Glutaredoxin-2 (110 aa).

Residues 6-106 form the Glutaredoxin domain; sequence KAFVEKAISN…KMIAELKENK (101 aa). Cys-26 and Cys-29 are oxidised to a cystine.

Belongs to the glutaredoxin family.

In terms of biological role, the disulfide bond functions as an electron carrier in the glutathione-dependent synthesis of deoxyribonucleotides by the enzyme ribonucleotide reductase. In addition, it is also involved in reducing some disulfides in a coupled system with glutathione reductase. Thioltransferase catalyzes cellular thiol-disulfide transhydrogenation reactions. It transfers reducing equivalents to cytosolic protein and nonprotein disulfides. This is Glutaredoxin-2 (grx2) from Schizosaccharomyces pombe (strain 972 / ATCC 24843) (Fission yeast).